A 476-amino-acid polypeptide reads, in one-letter code: tRNA(Ile)-lysidine synthase (476 aa).

An ATP-binding site is contributed by 30-35 (SGGPDS).

This sequence belongs to the tRNA(Ile)-lysidine synthase family.

The protein resides in the cytoplasm. It carries out the reaction cytidine(34) in tRNA(Ile2) + L-lysine + ATP = lysidine(34) in tRNA(Ile2) + AMP + diphosphate + H(+). Its function is as follows. Ligates lysine onto the cytidine present at position 34 of the AUA codon-specific tRNA(Ile) that contains the anticodon CAU, in an ATP-dependent manner. Cytidine is converted to lysidine, thus changing the amino acid specificity of the tRNA from methionine to isoleucine. The chain is tRNA(Ile)-lysidine synthase from Bacillus anthracis.